A 399-amino-acid polypeptide reads, in one-letter code: Protein shisa-8 (399 aa).

The first 36 residues, 1–36 (MERAGARGQRCGRRSHGLPLALRLALLLAGSPSGRA), serve as a signal peptide directing secretion. Topologically, residues 37–136 (GAPEEQEIAG…APRDPARERS (100 aa)) are extracellular. Residue Asn73 is glycosylated (N-linked (GlcNAc...) asparagine). A helical membrane pass occupies residues 137-157 (HTAVYAVCGVAALLVLVGIGA). At 158-399 (RLGLERAHSP…STNSKAEVTV (242 aa)) the chain is on the cytoplasmic side. Disordered regions lie at residues 207 to 248 (GDGV…GGSL) and 378 to 399 (FYSS…EVTV). Residues 389-399 (LSTNSKAEVTV) are compositionally biased toward polar residues.

The protein belongs to the shisa family. Interacts with AMPAR subunits GRIA1 and GRIA2. In terms of tissue distribution, brain-specific. Highly expressed in cerebellum and olfactory bulb.

The protein localises to the membrane. Its function is as follows. May regulate trafficking and current kinetics of AMPA-type glutamate receptor (AMPAR) at synapses. The polypeptide is Protein shisa-8 (Mus musculus (Mouse)).